The following is a 125-amino-acid chain: Large ribosomal subunit protein bL12 (125 aa).

It belongs to the bacterial ribosomal protein bL12 family. As to quaternary structure, homodimer. Part of the ribosomal stalk of the 50S ribosomal subunit. Forms a multimeric L10(L12)X complex, where L10 forms an elongated spine to which 2 to 4 L12 dimers bind in a sequential fashion. Binds GTP-bound translation factors.

Forms part of the ribosomal stalk which helps the ribosome interact with GTP-bound translation factors. Is thus essential for accurate translation. In Alkalilimnicola ehrlichii (strain ATCC BAA-1101 / DSM 17681 / MLHE-1), this protein is Large ribosomal subunit protein bL12.